We begin with the raw amino-acid sequence, 351 residues long: UDP-N-acetylglucosamine--N-acetylmuramyl-(pentapeptide) pyrophosphoryl-undecaprenol N-acetylglucosamine transferase (351 aa).

UDP-N-acetyl-alpha-D-glucosamine-binding positions include 12 to 14 (TGG), Asn-124, Arg-160, Ser-188, Ile-239, 258 to 263 (ALTVCE), and Gln-283.

This sequence belongs to the glycosyltransferase 28 family. MurG subfamily.

Its subcellular location is the cell inner membrane. The catalysed reaction is di-trans,octa-cis-undecaprenyl diphospho-N-acetyl-alpha-D-muramoyl-L-alanyl-D-glutamyl-meso-2,6-diaminopimeloyl-D-alanyl-D-alanine + UDP-N-acetyl-alpha-D-glucosamine = di-trans,octa-cis-undecaprenyl diphospho-[N-acetyl-alpha-D-glucosaminyl-(1-&gt;4)]-N-acetyl-alpha-D-muramoyl-L-alanyl-D-glutamyl-meso-2,6-diaminopimeloyl-D-alanyl-D-alanine + UDP + H(+). It participates in cell wall biogenesis; peptidoglycan biosynthesis. Cell wall formation. Catalyzes the transfer of a GlcNAc subunit on undecaprenyl-pyrophosphoryl-MurNAc-pentapeptide (lipid intermediate I) to form undecaprenyl-pyrophosphoryl-MurNAc-(pentapeptide)GlcNAc (lipid intermediate II). The protein is UDP-N-acetylglucosamine--N-acetylmuramyl-(pentapeptide) pyrophosphoryl-undecaprenol N-acetylglucosamine transferase of Actinobacillus pleuropneumoniae serotype 5b (strain L20).